A 230-amino-acid chain; its full sequence is Probable carboxylesterase Culp2 (230 aa).

A signal peptide (tat-type signal) is located at residues 1-32 (MNDLLTRRLLTMGAAAAMLAAVLLLTPITVPA). Cys45 and Cys112 are oxidised to a cystine. The active-site Nucleophile is Ser123. A disulfide bridge connects residues Cys185 and Cys192. The active site involves Asp189. His207 (proton donor/acceptor) is an active-site residue.

This sequence belongs to the cutinase family. Predicted to be exported by the Tat system. The position of the signal peptide cleavage has not been experimentally proven.

The protein resides in the secreted. It is found in the cell surface. The sequence is that of Probable carboxylesterase Culp2 (cut2) from Mycobacterium bovis (strain ATCC BAA-935 / AF2122/97).